We begin with the raw amino-acid sequence, 343 residues long: Probable xyloglucan endotransglucosylase/hydrolase protein 30 (343 aa).

The signal sequence occupies residues 1–23 (MSKSSYNHIFILILCLCLRSSSA). The GH16 domain maps to 24–224 (FTNLNTLSFE…YKFAPFVAEF (201 aa)). Catalysis depends on Glu-109, which acts as the Nucleophile. Glu-113 serves as the catalytic Proton donor. Xyloglucan contacts are provided by residues Glu-113 and 126–128 (QTN). An N-linked (GlcNAc...) asparagine glycan is attached at Asn-132. Xyloglucan is bound by residues 136–140 (HRGRE), 203–204 (DW), Gly-208, and Arg-285. A disulfide bridge links Cys-280 with Cys-293. The disordered stretch occupies residues 306–343 (TGRLKFGGTEARERRRNRRQQRRPEIEIESDPDDRKLL).

It belongs to the glycosyl hydrolase 16 family. XTH group 3 subfamily. In terms of processing, contains at least one intrachain disulfide bond essential for its enzymatic activity. Predominantly expressed in green siliques.

The protein localises to the secreted. It is found in the cell wall. It localises to the extracellular space. The protein resides in the apoplast. It carries out the reaction breaks a beta-(1-&gt;4) bond in the backbone of a xyloglucan and transfers the xyloglucanyl segment on to O-4 of the non-reducing terminal glucose residue of an acceptor, which can be a xyloglucan or an oligosaccharide of xyloglucan.. Its function is as follows. Catalyzes xyloglucan endohydrolysis (XEH) and/or endotransglycosylation (XET). Cleaves and religates xyloglucan polymers, an essential constituent of the primary cell wall, and thereby participates in cell wall construction of growing tissues. The chain is Probable xyloglucan endotransglucosylase/hydrolase protein 30 (XTH30) from Arabidopsis thaliana (Mouse-ear cress).